The primary structure comprises 264 residues: Tropinone reductase homolog At5g06060 (264 aa).

Position 15-39 (L15–H39) interacts with NADP(+). S148 contacts substrate. Y161 acts as the Proton acceptor in catalysis.

It belongs to the short-chain dehydrogenases/reductases (SDR) family. SDR65C subfamily.

This chain is Tropinone reductase homolog At5g06060, found in Arabidopsis thaliana (Mouse-ear cress).